Reading from the N-terminus, the 376-residue chain is Putative glutamate--cysteine ligase 2 (376 aa).

Belongs to the glutamate--cysteine ligase type 2 family. YbdK subfamily.

The catalysed reaction is L-cysteine + L-glutamate + ATP = gamma-L-glutamyl-L-cysteine + ADP + phosphate + H(+). In terms of biological role, ATP-dependent carboxylate-amine ligase which exhibits weak glutamate--cysteine ligase activity. The chain is Putative glutamate--cysteine ligase 2 from Corynebacterium glutamicum (strain R).